The primary structure comprises 131 residues: Holo-[acyl-carrier-protein] synthase (131 aa).

Positions 8 and 59 each coordinate Mg(2+).

It belongs to the P-Pant transferase superfamily. AcpS family. Mg(2+) serves as cofactor.

The protein resides in the cytoplasm. The catalysed reaction is apo-[ACP] + CoA = holo-[ACP] + adenosine 3',5'-bisphosphate + H(+). Its function is as follows. Transfers the 4'-phosphopantetheine moiety from coenzyme A to a Ser of acyl-carrier-protein. This chain is Holo-[acyl-carrier-protein] synthase, found in Orientia tsutsugamushi (strain Boryong) (Rickettsia tsutsugamushi).